The primary structure comprises 3072 residues: E1A-binding protein p400 (3072 aa).

Residues 1-22 (MHHGSGPQNVQHQLQRSRSFTG) show a composition bias toward polar residues. 3 disordered regions span residues 1-55 (MHHG…SPGY), 125-149 (PMSQQVQTQSPTQPSPGPGQTLQNV), and 222-250 (LSQPHAQSGGTIHHLGPQSPAAAGGTGLQ). A compositionally biased stretch (pro residues) spans 31 to 40 (PNLPPSPAAP). 2 stretches are compositionally biased toward low complexity: residues 41–53 (FAPSASPSAPQSP) and 125–136 (PMSQQVQTQSPT). A phosphoserine mark is found at Ser52 and Ser134. Residues Ser315 and Ser321 each carry the phosphoserine modification. Disordered regions lie at residues 485–519 (SLTGSLVVGPGSATEADPFKRQQVMPPTEQSKRPR), 544–601 (MPTV…ASVP), and 635–769 (APIP…SQDK). A compositionally biased stretch (low complexity) spans 556-569 (QATQLTGQKQSQQQ). Residues 570–583 (YDPSTGPPVQNAAS) show a composition bias toward polar residues. The span at 586 to 599 (TPPPQLPARLPPAS) shows a compositional bias: pro residues. Low complexity-rich tracts occupy residues 646 to 657 (PAPSSQPAQPAL), 668 to 682 (QTSQLSSQTQTVAST), and 695 to 710 (SLPTSSSSSSLVPVSG). 2 stretches are compositionally biased toward polar residues: residues 724–741 (NRPSSATNKALSPITSRS) and 754–765 (SPAQNAASSQDG). 3 positions are modified to phosphoserine: Ser735, Ser741, and Ser754. In terms of domain architecture, HSA spans 798-870 (LPKLQEAPRP…EQSRLRRIAA (73 aa)). Residues 914–928 (ESRLKGFDTSPEHSL) are compositionally biased toward basic and acidic residues. Disordered regions lie at residues 914 to 952 (ESRLKGFDTSPEHSLDLGISGRKRKASTSLTDDEVEDEE) and 997 to 1024 (FQWPQPEPDHEESSGEEDVEDCPSDRES). The residue at position 922 (Thr922) is a Phosphothreonine. A phosphoserine mark is found at Ser923, Ser927, and Ser940. Thr944 carries the post-translational modification Phosphothreonine. Residues 950 to 1364 (DEEETIEEEE…SVLSVLTRLQ (415 aa)) form an interactions with RUVBL1 and RUVBL2 region. 2 positions are modified to phosphoserine: Ser1009 and Ser1010. The region spanning 1102-1267 (AKLYRKNLNG…WTMVHFLIPG (166 aa)) is the Helicase ATP-binding domain. An ATP-binding site is contributed by 1115–1122 (DEAGLGKT). The short motif at 1218–1221 (DEMQ) is the DEAD box-like element. Lys1471 carries the N6-acetyllysine modification. A disordered region spans residues 1473–1503 (EGRTVAFPSTHPPRMANTNTSTATPQGQVRG). Residues 1488–1499 (ANTNTSTATPQG) are compositionally biased toward polar residues. Residues Ser1646 and Ser1650 each carry the phosphoserine modification. Positions 1815–1972 (KLEALAILLQ…GNDYSMAFLT (158 aa)) constitute a Helicase C-terminal domain. Disordered stretches follow at residues 2033–2062 (AQRSTEEAVPGSSSVAVSSDSDGSRYDEEP) and 2203–2227 (KERKRHKTDPSAAGRKKKQRHGEAV). Residues 2043–2053 (GSSSVAVSSDS) show a composition bias toward low complexity. 2 positions are modified to N6-acetyllysine: Lys2265 and Lys2272. The Myb-like domain occupies 2276 to 2345 (EPAQDSPDWL…QCRNRYENVI (70 aa)). The interaction with ZNF42 stretch occupies residues 2440-2699 (KEKKALADQQ…QQQQQQQQQT (260 aa)). Positions 2441–2534 (EKKALADQQK…PQSKGQPTMT (94 aa)) are disordered. Low complexity-rich tracts occupy residues 2446–2455 (ADQQKAQQPP) and 2463–2478 (QQQQQQQQQQQQQQQQ). A compositionally biased stretch (pro residues) spans 2479 to 2493 (QPPPPPQQPPPPVPQ). Low complexity predominate over residues 2494-2526 (PQAASSQTPAGQPAVQPQPQPQVQTQPQPVQPQ). Ser2614 carries the post-translational modification Phosphoserine. Disordered regions lie at residues 2734–2790 (QKMQ…TGTT) and 3028–3072 (ASLQ…PPCQ). A compositionally biased stretch (pro residues) spans 2739–2754 (PPQPPPPQAQPGPPQQ). The span at 2755–2775 (PAQVQVQTPQPPQQQQSPQLT) shows a compositional bias: low complexity. The span at 3042 to 3053 (PASSDSPSQQPK) shows a compositional bias: polar residues.

The protein belongs to the SNF2/RAD54 helicase family. SWR1 subfamily. As to quaternary structure, component of the NuA4 histone acetyltransferase complex which contains the catalytic subunit KAT5/TIP60 and the subunits EP400, TRRAP/PAF400, BRD8/SMAP, EPC1, DMAP1/DNMAP1, RUVBL1/TIP49, RUVBL2, ING3, actin, ACTL6A/BAF53A, MORF4L1/MRG15, MORF4L2/MRGX, MRGBP, YEATS4/GAS41, VPS72/YL1 and MEAF6. May also participate in the formation of NuA4 related complexes which lack the KAT5/TIP60 catalytic subunit, but which include the SWI/SNF related protein SRCAP. The NuA4 complex interacts with MYC. EP400 interacts with TRRAP, RUVBL1 and RUVBL2. Component of a SWR1-like complex. Interacts with ZNF42. Interacts with PHF5A. Expressed in brain, thymus, lung, liver, spleen, kidney, colon and bone marrow.

The protein localises to the nucleus. Functionally, component of the NuA4 histone acetyltransferase complex which is involved in transcriptional activation of select genes principally by acetylation of nucleosomal histones H4 and H2A. This modification may both alter nucleosome - DNA interactions and promote interaction of the modified histones with other proteins which positively regulate transcription. May be required for transcriptional activation of E2F1 and MYC target genes during cellular proliferation. The NuA4 complex ATPase and helicase activities seem to be, at least in part, contributed by the association of RUVBL1 and RUVBL2 with EP400. Component of a SWR1-like complex that specifically mediates the removal of histone H2A.Z/H2AZ1 from the nucleosome. Regulates transcriptional activity of ZNF42. The polypeptide is E1A-binding protein p400 (Ep400) (Mus musculus (Mouse)).